We begin with the raw amino-acid sequence, 146 residues long: Large ribosomal subunit protein uL14 (146 aa).

This sequence belongs to the universal ribosomal protein uL14 family.

This is Large ribosomal subunit protein uL14 (RPL23) from Encephalitozoon cuniculi (strain GB-M1) (Microsporidian parasite).